The sequence spans 311 residues: Heme A synthase (311 aa).

Residues 1–6 (MQRFIK) lie on the Cytoplasmic side of the membrane. The helical transmembrane segment at 7 to 27 (WLAVITSLDLLIVLLGGALVT) threads the bilayer. Topologically, residues 28-62 (KTGSGQGCGKSWPLCNGEFVPSNLSMETIIELSHR) are extracellular. The cysteines at positions 35 and 42 are disulfide-linked. E58 is an active-site residue. H61 contributes to the heme o binding site. The chain crosses the membrane as a helical span at residues 63-83 (LTSGSAGILVTLLCILSWKYY). The Cytoplasmic portion of the chain corresponds to 84–91 (KHVRETKT). Residues 92–112 (LAILSFVFLVAQALMGAAAVV) form a helical membrane-spanning segment. Residues 113-121 (WGQMPAVLA) are Extracellular-facing. A helical membrane pass occupies residues 122-142 (IHFGISLISFASVILLTCLIF). Position 123 (H123) interacts with heme o. Topologically, residues 143–159 (EIDQKFDARSLIMDKKM) are cytoplasmic. Residues 160–180 (KFHIYGVTIYSYIVVYTGALV) form a helical membrane-spanning segment. Residues 181–211 (RHERASLACPDFPLCSKNRPMPTQLHEWVQM) are Extracellular-facing. Cysteines 189 and 195 form a disulfide. Residues 212 to 232 (GHRVAAMLIFAWILYAMILAI) form a helical membrane-spanning segment. H213 lines the heme b pocket. At 233–243 (RHYKQQPVVYW) the chain is on the cytoplasmic side. Residues 244–264 (GWIISFILVTLQAVVGVLVVF) form a helical membrane-spanning segment. The Extracellular portion of the chain corresponds to 265-271 (TNASLAM). The helical transmembrane segment at 272–292 (ALLHSLFISCLFAVLCYLVML) threads the bilayer. H275 lines the heme b pocket. The Cytoplasmic segment spans residues 293–311 (GTRIKVNAKEAGSTSKQTK).

It belongs to the COX15/CtaA family. Type 1 subfamily. Interacts with CtaB. Requires heme b as cofactor.

The protein localises to the cell membrane. It catalyses the reaction Fe(II)-heme o + 2 A + H2O = Fe(II)-heme a + 2 AH2. Its pathway is porphyrin-containing compound metabolism; heme A biosynthesis; heme A from heme O: step 1/1. Functionally, catalyzes the conversion of heme O to heme A by two successive hydroxylations of the methyl group at C8. The first hydroxylation forms heme I, the second hydroxylation results in an unstable dihydroxymethyl group, which spontaneously dehydrates, resulting in the formyl group of heme A. The chain is Heme A synthase from Bacillus cereus (strain G9842).